The chain runs to 964 residues: Syndetin (964 aa).

Met-1 is modified (N-acetylmethionine). Positions 1-25 are disordered; that stretch reads MQKIKSLMTRQGLKSPPESLNDLGA. Phosphoserine is present on Ser-15. Coiled-coil stretches lie at residues 81–107 and 216–244; these read LNLQELEEYRDKLKQQQAAVSKKVADL and YSCISELNSKLQDTLEQIEEQLDVALSKI. Ser-494, Ser-498, Ser-559, and Ser-561 each carry phosphoserine. The disordered stretch occupies residues 532–563; it reads DEETEDVLASNGYESDEQEKSAYQDYDSDSDV. Lys-963 is covalently cross-linked (Glycyl lysine isopeptide (Lys-Gly) (interchain with G-Cter in SUMO1); alternate). A Glycyl lysine isopeptide (Lys-Gly) (interchain with G-Cter in SUMO2); alternate cross-link involves residue Lys-963.

This sequence belongs to the syndetin family. As to quaternary structure, component of the endosome-associated retrograde protein (EARP) complex, composed of VPS51, VPS52, VPS53 and VPS50/Syndetin. The EARP complex interacts with EIPR1. Interacts with VPS51 and VPS53 in an EIPR1-independent manner. Expressed in the brain (at protein level).

It localises to the recycling endosome. The protein localises to the membrane. Functionally, acts as a component of the EARP complex that is involved in endocytic recycling. The EARP complex associates with Rab4-positive endosomes and promotes recycling of internalized transferrin receptor (TFRC) to the plasma membrane. Within the EARP complex, required to tether the complex to recycling endosomes. Not involved in retrograde transport from early and late endosomes to the trans-Golgi network (TGN). The chain is Syndetin from Rattus norvegicus (Rat).